The primary structure comprises 118 residues: Succinate dehydrogenase assembly factor 4, mitochondrial (118 aa).

The N-terminal 30 residues, 1–30 (MQSVTRQTARVLPQMGKQVSYLSTSGAWRA), are a transit peptide targeting the mitochondrion. The disordered stretch occupies residues 65 to 118 (GKLDEFSRHPYQEKEPLKPWPNQTNPYTGEIGGPAGPEPTRYGDWERKGRVSDF). Basic and acidic residues-rich tracts occupy residues 66 to 81 (KLDE…KEPL) and 105 to 118 (RYGD…VSDF).

This sequence belongs to the SDHAF4 family. As to quaternary structure, interacts with SdhA in its FAD-bound form.

The protein localises to the mitochondrion matrix. Functionally, plays an essential role in the assembly of succinate dehydrogenase (SDH), an enzyme complex (also referred to as respiratory complex II) that is a component of both the tricarboxylic acid (TCA) cycle and the mitochondrial electron transport chain, and which couples the oxidation of succinate to fumarate with the reduction of ubiquinone (coenzyme Q) to ubiquinol. Binds to the flavoprotein subunit SdhA in its FAD-bound form, blocking the generation of excess reactive oxygen species (ROS) and facilitating its assembly with the iron-sulfur protein subunit SdhB into the SDH catalytic dimer. This Drosophila melanogaster (Fruit fly) protein is Succinate dehydrogenase assembly factor 4, mitochondrial.